The following is a 310-amino-acid chain: tRNA-cytidine(32) 2-sulfurtransferase (310 aa).

The short motif at 58–63 (SGGKDS) is the PP-loop motif element. [4Fe-4S] cluster contacts are provided by C133, C136, and C224.

The protein belongs to the TtcA family. As to quaternary structure, homodimer. Mg(2+) is required as a cofactor. [4Fe-4S] cluster serves as cofactor.

It is found in the cytoplasm. It catalyses the reaction cytidine(32) in tRNA + S-sulfanyl-L-cysteinyl-[cysteine desulfurase] + AH2 + ATP = 2-thiocytidine(32) in tRNA + L-cysteinyl-[cysteine desulfurase] + A + AMP + diphosphate + H(+). It functions in the pathway tRNA modification. Functionally, catalyzes the ATP-dependent 2-thiolation of cytidine in position 32 of tRNA, to form 2-thiocytidine (s(2)C32). The sulfur atoms are provided by the cysteine/cysteine desulfurase (IscS) system. The protein is tRNA-cytidine(32) 2-sulfurtransferase of Paracidovorax citrulli (strain AAC00-1) (Acidovorax citrulli).